The sequence spans 71 residues: Protein MMP24OS (71 aa).

Residues 1–10 (MGAQLSGGRG) are compositionally biased toward gly residues. Positions 1 to 61 (MGAQLSGGRG…PSPWGPLDDV (61 aa)) are disordered. The span at 36 to 55 (HPPQPQPQPQPQPQPEPSPW) shows a compositional bias: pro residues.

The sequence is that of Protein MMP24OS from Homo sapiens (Human).